The chain runs to 1187 residues: Protein WWC2 (1187 aa).

WW domains lie at 10–43 (LPLP…DPRD) and 57–90 (DELP…DPRK). Coiled-coil stretches lie at residues 121-194 (KEQR…YKQQ) and 224-256 (ELKS…FHLD). Ser-286 is modified (phosphoserine). The stretch at 302–423 (LAEKVRLSLQ…EETTKLTTSL (122 aa)) forms a coiled coil. Residues 438-464 (SSGSSLGSLASSRGSLNTSSRGSLNSL) are disordered. A C2 domain is found at 697–820 (ETAQVQIGLR…FSNEIFMLWY (124 aa)). Disordered regions lie at residues 830–849 (CKKN…QPML) and 874–963 (ELAQ…ETNT). The stretch at 859–885 (ALLARTSAELLAVEQELAQEEEEEELR) forms a coiled coil. Positions 875-884 (LAQEEEEEEL) are enriched in acidic residues. Position 999 is a phosphothreonine (Thr-999). Ser-1017 bears the Phosphoserine mark. Residues 1026 to 1045 (SLFVRNSTERRSLRVKRAVC) are interaction with PRKCZ. Residues 1063 to 1143 (DLELDLQASL…DLNAERLMRQ (81 aa)) adopt a coiled-coil conformation.

This sequence belongs to the WWC family. As to quaternary structure, forms homodimers and heterodimers with WWC1 and WWC3. Interacts with DLC1 and PRKCZ. Interacts (via WW domains) with LATS1 and LATS2.

It is found in the cytoplasm. The protein localises to the cytosol. Functionally, regulator of the Hippo signaling pathway, also known as the Salvador-Warts-Hippo (SWH) pathway. Enhances phosphorylation of LATS1 and YAP1 and negatively regulates cell proliferation and organ growth due to a suppression of the transcriptional activity of YAP1, the major effector of the Hippo pathway. This chain is Protein WWC2 (Wwc2), found in Mus musculus (Mouse).